A 306-amino-acid chain; its full sequence is Pantothenate kinase (306 aa).

Position 91-98 (91-98 (GSVAVGKS)) interacts with ATP.

It belongs to the prokaryotic pantothenate kinase family.

The protein resides in the cytoplasm. It catalyses the reaction (R)-pantothenate + ATP = (R)-4'-phosphopantothenate + ADP + H(+). It functions in the pathway cofactor biosynthesis; coenzyme A biosynthesis; CoA from (R)-pantothenate: step 1/5. This chain is Pantothenate kinase, found in Streptococcus thermophilus (strain ATCC BAA-491 / LMD-9).